A 316-amino-acid polypeptide reads, in one-letter code: Glutathione synthetase (316 aa).

Residues 125–311 (KLFTAWFPEL…ITGMLMNAIE (187 aa)) form the ATP-grasp domain. 151-207 (HQKHGDVIFKPLDGMGGASIFRLKKDDPNVGVIIETLTEHGNRFCMAQNFLPAIKEG) lines the ATP pocket. Glutamate 281 and asparagine 283 together coordinate Mg(2+).

The protein belongs to the prokaryotic GSH synthase family. Requires Mg(2+) as cofactor. Mn(2+) is required as a cofactor.

The enzyme catalyses gamma-L-glutamyl-L-cysteine + glycine + ATP = glutathione + ADP + phosphate + H(+). Its pathway is sulfur metabolism; glutathione biosynthesis; glutathione from L-cysteine and L-glutamate: step 2/2. This is Glutathione synthetase from Photorhabdus laumondii subsp. laumondii (strain DSM 15139 / CIP 105565 / TT01) (Photorhabdus luminescens subsp. laumondii).